We begin with the raw amino-acid sequence, 50 residues long: Small ribosomal subunit protein eS31 (50 aa).

The Zn(2+) site is built by Cys22, Cys25, Cys40, and Cys43. A C4-type zinc finger spans residues 22–43; that stretch reads CPRCGPGVFMADHGDRWACGKC.

This sequence belongs to the eukaryotic ribosomal protein eS31 family. Part of the 30S ribosomal subunit. It depends on Zn(2+) as a cofactor.

This chain is Small ribosomal subunit protein eS31, found in Pyrococcus furiosus (strain ATCC 43587 / DSM 3638 / JCM 8422 / Vc1).